The sequence spans 134 residues: Spermadhesin-1 (134 aa).

The first 20 residues, 1 to 20 (MKLSSVIPWALLLSTATVDS), serve as a signal peptide directing secretion. 2 disulfides stabilise this stretch: C30-C51 and C74-C95. Positions 30-131 (CGGILKEESG…SFYEVLYFQD (102 aa)) constitute a CUB domain.

The protein belongs to the spermadhesin family. In terms of tissue distribution, seminal vesicle tissue, ampulla and weakly in tissue of epididymis.

Its subcellular location is the secreted. Its function is as follows. Stimulates cell division and progesterone secretion of bovine granulosa cells in vitro in a potent and dose dependent manner. This protein appears to be a potent growth factor with effects on ovarian granulosa cells. In Bos taurus (Bovine), this protein is Spermadhesin-1 (SPADH1).